Here is a 546-residue protein sequence, read N- to C-terminus: NAD(P)H-quinone oxidoreductase chain 4 (546 aa).

A run of 14 helical transmembrane segments spans residues 24-44, 56-76, 108-128, 132-152, 156-176, 188-208, 232-252, 263-283, 297-317, 326-346, 352-372, 396-416, 437-457, and 484-504; these read FPWL…IPFF, FALS…INGF, MPLI…AWPV, PKLF…VFAV, LLFF…LAIW, FIIY…AMGF, ILCY…VPLH, TAPV…YALL, FSPL…LTSF, IAYS…SFSS, AMLQ…LVGA, FALW…SGFV, VIMA…LLSM, and IYII…PRLV.

Belongs to the complex I subunit 4 family.

The protein localises to the cellular thylakoid membrane. The catalysed reaction is a plastoquinone + NADH + (n+1) H(+)(in) = a plastoquinol + NAD(+) + n H(+)(out). It carries out the reaction a plastoquinone + NADPH + (n+1) H(+)(in) = a plastoquinol + NADP(+) + n H(+)(out). Its function is as follows. NDH-1 shuttles electrons from NAD(P)H, via FMN and iron-sulfur (Fe-S) centers, to quinones in the respiratory chain. The immediate electron acceptor for the enzyme in this species is believed to be plastoquinone. Couples the redox reaction to proton translocation (for every two electrons transferred, four hydrogen ions are translocated across the cytoplasmic membrane), and thus conserves the redox energy in a proton gradient. This is NAD(P)H-quinone oxidoreductase chain 4 from Prochlorococcus marinus subsp. pastoris (strain CCMP1986 / NIES-2087 / MED4).